The sequence spans 561 residues: Phosphoinositide phospholipase C 1 (561 aa).

Residues 21–54 (EPPEEIKNLFHDYSQDDRMSADEMLRFVIQVQGE) enclose the EF-hand domain. The region spanning 105–249 (QDMNQPLSHY…LKNKILISTK (145 aa)) is the PI-PLC X-box domain. Residues His-120 and His-166 contribute to the active site. Over residues 256 to 266 (QTQISKGSTTD) the composition is skewed to polar residues. Residues 256–285 (QTQISKGSTTDESTRAKKISDAEEQVQEED) are disordered. Basic and acidic residues predominate over residues 267–276 (ESTRAKKISD). The region spanning 294-410 (RDLISIHAGN…GYVKKPDVLL (117 aa)) is the PI-PLC Y-box domain. Residues 414-541 (PEGEIFDPCS…PGIRAVRLHD (128 aa)) form the C2 domain. Residues Asp-452, Asp-458, Asp-510, Asp-512, and Asp-518 each contribute to the Ca(2+) site.

It depends on Ca(2+) as a cofactor. Expressed in stems, leaves, roots, flowers and siliques. Predominant in the vascular tissues of roots and leaves.

It is found in the cell membrane. The enzyme catalyses a 1,2-diacyl-sn-glycero-3-phospho-(1D-myo-inositol-4,5-bisphosphate) + H2O = 1D-myo-inositol 1,4,5-trisphosphate + a 1,2-diacyl-sn-glycerol + H(+). Its function is as follows. The production of the second messenger molecules diacylglycerol (DAG) and inositol 1,4,5-trisphosphate (IP3) is mediated by activated phosphatidylinositol-specific phospholipase C enzymes. Required for secondary responses to abscisic acid signals. The chain is Phosphoinositide phospholipase C 1 (PLC1) from Arabidopsis thaliana (Mouse-ear cress).